The primary structure comprises 547 residues: Chaperonin GroEL (547 aa).

ATP is bound by residues 30–33 (TLGP), Lys-51, 87–91 (DGTTT), Gly-415, and Asp-496. Positions 527–547 (SDKAEPMPMRGGMGGMGGMDF) are disordered. The segment covering 537 to 547 (GGMGGMGGMDF) has biased composition (gly residues).

Belongs to the chaperonin (HSP60) family. As to quaternary structure, forms a cylinder of 14 subunits composed of two heptameric rings stacked back-to-back. Interacts with the co-chaperonin GroES.

It localises to the cytoplasm. It carries out the reaction ATP + H2O + a folded polypeptide = ADP + phosphate + an unfolded polypeptide.. Its function is as follows. Together with its co-chaperonin GroES, plays an essential role in assisting protein folding. The GroEL-GroES system forms a nano-cage that allows encapsulation of the non-native substrate proteins and provides a physical environment optimized to promote and accelerate protein folding. In Rickettsia rickettsii (strain Sheila Smith), this protein is Chaperonin GroEL.